The primary structure comprises 104 residues: L-rhamnose mutarotase (104 aa).

Position 18 (Y18) interacts with substrate. H22 (proton donor) is an active-site residue. Substrate-binding positions include Y41 and 76–77 (WW).

The protein belongs to the rhamnose mutarotase family. As to quaternary structure, homodimer.

It localises to the cytoplasm. It catalyses the reaction alpha-L-rhamnose = beta-L-rhamnose. It participates in carbohydrate metabolism; L-rhamnose metabolism. Involved in the anomeric conversion of L-rhamnose. The sequence is that of L-rhamnose mutarotase from Burkholderia ambifaria (strain ATCC BAA-244 / DSM 16087 / CCUG 44356 / LMG 19182 / AMMD) (Burkholderia cepacia (strain AMMD)).